Reading from the N-terminus, the 130-residue chain is Small ribosomal subunit protein uS8y (130 aa).

The protein belongs to the universal ribosomal protein uS8 family.

The polypeptide is Small ribosomal subunit protein uS8y (RPS15AC) (Arabidopsis thaliana (Mouse-ear cress)).